The chain runs to 274 residues: Protein CURLY FLAG LEAF 1 (274 aa).

Residues serine 17–glutamate 44 are disordered. The EAR signature appears at threonine 47 to serine 52. The WW domain occupies valine 54–serine 88. Disordered regions lie at residues threonine 83–threonine 133 and glycine 175–aspartate 216. Low complexity-rich tracts occupy residues arginine 87–arginine 106, alanine 121–threonine 133, and serine 184–serine 207.

As to quaternary structure, binds to HDG1.

In terms of biological role, negatively regulates the cuticle development probably by interacting with the HD-ZIP IV transcription factor HDG1. The protein is Protein CURLY FLAG LEAF 1 of Oryza sativa subsp. japonica (Rice).